We begin with the raw amino-acid sequence, 771 residues long: Kojibiose phosphorylase (771 aa).

Residue 358–359 (WD) participates in substrate binding. Glu498 (proton donor) is an active-site residue. 611 to 612 (KQ) lines the substrate pocket.

This sequence belongs to the glycosyl hydrolase 65 family.

The catalysed reaction is kojibiose + phosphate = beta-D-glucose 1-phosphate + D-glucose. Its function is as follows. Catalyzes the reversible phosphorolysis of kojibiose into beta-D-glucose 1-phosphate (Glc1P) and D-glucose. The polypeptide is Kojibiose phosphorylase (kojP) (Caldanaerobacter subterraneus subsp. tengcongensis (strain DSM 15242 / JCM 11007 / NBRC 100824 / MB4) (Thermoanaerobacter tengcongensis)).